We begin with the raw amino-acid sequence, 200 residues long: MIASVRGVVTATGPDHAVIEVGGVGLAVQCAPGTIADLRVGQPARLATSLVVREDSLTLYGFADDNAKALFELLQTASGVGPRLAQAVLAVHTPETVRAAIANADTAALTRVPGIGKKGAERLVLELRDRIGPVPVGGDGAAGVTTGAWPEQVRQALVGLGWTAGQAEQAVAAVAETVDGEVPPVPVLLRQAIRLLGRTR.

Residues methionine 1–alanine 63 are domain I. The tract at residues aspartate 64–alanine 142 is domain II. The interval glycine 143–glutamate 151 is flexible linker. Positions glutamate 151–arginine 200 are domain III.

The protein belongs to the RuvA family. Homotetramer. Forms an RuvA(8)-RuvB(12)-Holliday junction (HJ) complex. HJ DNA is sandwiched between 2 RuvA tetramers; dsDNA enters through RuvA and exits via RuvB. An RuvB hexamer assembles on each DNA strand where it exits the tetramer. Each RuvB hexamer is contacted by two RuvA subunits (via domain III) on 2 adjacent RuvB subunits; this complex drives branch migration. In the full resolvosome a probable DNA-RuvA(4)-RuvB(12)-RuvC(2) complex forms which resolves the HJ.

It is found in the cytoplasm. Functionally, the RuvA-RuvB-RuvC complex processes Holliday junction (HJ) DNA during genetic recombination and DNA repair, while the RuvA-RuvB complex plays an important role in the rescue of blocked DNA replication forks via replication fork reversal (RFR). RuvA specifically binds to HJ cruciform DNA, conferring on it an open structure. The RuvB hexamer acts as an ATP-dependent pump, pulling dsDNA into and through the RuvAB complex. HJ branch migration allows RuvC to scan DNA until it finds its consensus sequence, where it cleaves and resolves the cruciform DNA. This is Holliday junction branch migration complex subunit RuvA from Salinispora arenicola (strain CNS-205).